We begin with the raw amino-acid sequence, 417 residues long: Laccase-like protein claX (417 aa).

Belongs to the multicopper oxidase family.

In terms of biological role, laccase-like protein; part of the gene cluster that mediates the biosynthesis of clavilactone A, a meroterpenoid that features a unique benzo-fused ten-membered carbocyclic ring unit with an alpha,beta-epoxy-gamma-lactone moiety, forming an intriguing 10/5/3 tricyclic nested skeleton. ClaR, ClaS and ClaT are sufficient to produce clavilactone A and the function of claX, if any, has still to be identified. The biosynthesis begins with the prenyltransferase claS that transfers geranyl pyrophosphate (GPP) to hydroquinone to produces geranylhydroquinon. The cytochrome P450 monooxygenase claR then catalyzes the diradical coupling reaction between the intramolecular hydroquinone and allyl moieties to form the benzo-fused ten-membered carbocyclic ring unit of wigantol. Finally the cytochrome P450 monooxygenase claT exquisitely and stereoselectively assembles the alpha,beta-epoxy-gamma-lactone moiety, producing clavilactone A via arnebinol A. This is Laccase-like protein claX from Ampulloclitocybe clavipes (Club foot).